The chain runs to 307 residues: Nucleotide-binding protein AAur_2084 (307 aa).

Residues 1 to 21 (MDEATAKSGTEQDGLTPVKPP) are disordered. Position 30–37 (30–37 (GMSGAGRS)) interacts with ATP. Residue 81-84 (DVRS) participates in GTP binding.

It belongs to the RapZ-like family.

In terms of biological role, displays ATPase and GTPase activities. The chain is Nucleotide-binding protein AAur_2084 from Paenarthrobacter aurescens (strain TC1).